The primary structure comprises 178 residues: GTP-dependent dephospho-CoA kinase (178 aa).

Residues D48, I49, D67, K69, and E126 each coordinate GTP.

This sequence belongs to the GTP-dependent DPCK family.

The catalysed reaction is 3'-dephospho-CoA + GTP = GDP + CoA + H(+). It participates in cofactor biosynthesis; coenzyme A biosynthesis. In terms of biological role, catalyzes the GTP-dependent phosphorylation of the 3'-hydroxyl group of dephosphocoenzyme A to form coenzyme A (CoA). The sequence is that of GTP-dependent dephospho-CoA kinase from Methanothrix thermoacetophila (strain DSM 6194 / JCM 14653 / NBRC 101360 / PT) (Methanosaeta thermophila).